We begin with the raw amino-acid sequence, 269 residues long: Leucinostatins biosynthesis cluster protein T (269 aa).

The first 15 residues, 1–15 (MHIILTGTGLVGAIA), serve as a signal peptide directing secretion. An N-linked (GlcNAc...) asparagine glycan is attached at Asn-254.

Its function is as follows. Part of the gene cluster that mediates the biosynthesis of the lipopeptide antibiotics leucinostatins that show extensive biological activities, including antimalarial, antiviral, antibacterial, antifungal, and antitumor activities, as well as phytotoxic. The function of lcsT within the leucinostatins biosynthesis has not been identified yet. The sequence is that of Leucinostatins biosynthesis cluster protein T from Purpureocillium lilacinum (Paecilomyces lilacinus).